A 369-amino-acid chain; its full sequence is UDP-glucose 4-epimerase 4 (369 aa).

Residue 19 to 50 (TVLVTGGAGYIGSHTVLQLLAAGFRVVVADSL) participates in NAD(+) binding. S144 is a substrate binding site. Y168 functions as the Proton acceptor in the catalytic mechanism.

Belongs to the NAD(P)-dependent epimerase/dehydratase family. The cofactor is NAD(+).

The catalysed reaction is UDP-alpha-D-glucose = UDP-alpha-D-galactose. The protein operates within carbohydrate metabolism; galactose metabolism. Catalyzes the interconversion between UDP-glucose and UDP-galactose. The sequence is that of UDP-glucose 4-epimerase 4 (UGE-4) from Oryza sativa subsp. japonica (Rice).